The sequence spans 506 residues: Sugar transport protein 5 (506 aa).

Residues 1–19 (MAGGGLALDVSSAGNIDAK) lie on the Cytoplasmic side of the membrane. 12 helical membrane passes run 20–40 (ITAA…IFGY), 81–101 (LLTA…LVAS), 117–137 (GFTF…AMLI), 141–161 (ILLG…LSEV), 168–188 (GAFN…ANLI), 201–221 (ISLG…LFIS), 287–307 (LVVA…VNAF), 325–345 (IATF…TMVI), 352–372 (FLFI…AVLL), 390–410 (VTVV…WGPL), 430–450 (LSVA…LATL), and 456–476 (GAFL…IMFL). The Cytoplasmic segment spans residues 477–506 (PETKGIPVDSMYQVWEKHWYWQRFTKPTST).

This sequence belongs to the major facilitator superfamily. Sugar transporter (TC 2.A.1.1) family.

It localises to the membrane. In terms of biological role, mediates an active uptake of hexoses, probably by sugar/hydrogen symport. The polypeptide is Sugar transport protein 5 (STP5) (Arabidopsis thaliana (Mouse-ear cress)).